The chain runs to 335 residues: Tetraacyldisaccharide 4'-kinase (335 aa).

51 to 58 (HVGGAGKT) is a binding site for ATP.

This sequence belongs to the LpxK family.

It carries out the reaction a lipid A disaccharide + ATP = a lipid IVA + ADP + H(+). It participates in glycolipid biosynthesis; lipid IV(A) biosynthesis; lipid IV(A) from (3R)-3-hydroxytetradecanoyl-[acyl-carrier-protein] and UDP-N-acetyl-alpha-D-glucosamine: step 6/6. Its function is as follows. Transfers the gamma-phosphate of ATP to the 4'-position of a tetraacyldisaccharide 1-phosphate intermediate (termed DS-1-P) to form tetraacyldisaccharide 1,4'-bis-phosphate (lipid IVA). This Nitrobacter hamburgensis (strain DSM 10229 / NCIMB 13809 / X14) protein is Tetraacyldisaccharide 4'-kinase.